The primary structure comprises 209 residues: Ribosomal RNA large subunit methyltransferase E (209 aa).

Residues Gly63, Trp65, Asp83, Asp99, and Asp124 each contribute to the S-adenosyl-L-methionine site. Catalysis depends on Lys164, which acts as the Proton acceptor.

This sequence belongs to the class I-like SAM-binding methyltransferase superfamily. RNA methyltransferase RlmE family.

The protein localises to the cytoplasm. The enzyme catalyses uridine(2552) in 23S rRNA + S-adenosyl-L-methionine = 2'-O-methyluridine(2552) in 23S rRNA + S-adenosyl-L-homocysteine + H(+). Specifically methylates the uridine in position 2552 of 23S rRNA at the 2'-O position of the ribose in the fully assembled 50S ribosomal subunit. This is Ribosomal RNA large subunit methyltransferase E from Yersinia pseudotuberculosis serotype O:1b (strain IP 31758).